The following is a 243-amino-acid chain: MKYSIASMKVTLFFYFLCAKNIASLKYTKSNLSFLYNGCDNINSGGVNAHRNKTTVQTKNKHSKLKILSLNEKQDEELHYELNPENTEKVLNLIRPKLQIDNGDVELVDIKGNDLYIRLLGNCITCSSNSVTVSQVIKKTLKMYIRGPGNKEPNVIIINFDEINEENILNCLSDLKPYFDFLKIKLVIKEMINNKENINNSVMLVFKNIENEDKEVNIPHNIKTEITGRLKQNFPTLTVNFEN.

This sequence belongs to the NifU family. Homodimer.

Its subcellular location is the plastid. It is found in the apicoplast. Its pathway is cofactor biosynthesis; iron-sulfur cluster biosynthesis. Its function is as follows. Binds and transfers [4Fe-4S] iron-sulfur clusters to target proteins. The protein is NifU-like scaffold protein of Plasmodium berghei (strain Anka).